A 705-amino-acid polypeptide reads, in one-letter code: p-hydroxybenzoic acid--AMP ligase FadD22 (705 aa).

Residues 541 to 619 (ERQRLVVDAV…GLAQYLEAEL (79 aa)) enclose the Carrier domain. Ser-579 carries the O-(pantetheine 4'-phosphoryl)serine modification.

Belongs to the ATP-dependent AMP-binding enzyme family.

The enzyme catalyses holo-[4-hydroxyphenylalkanoate synthase] + 4-hydroxybenzoate + ATP = 4-hydroxyphenyl-[4-hydroxyphenylalkanoate synthase] + AMP + diphosphate. Its pathway is lipid metabolism; fatty acid biosynthesis. In terms of biological role, catalyzes the adenylation of p-hydroxybenzoic acid (pHBA) to form p-hydroxybenzoic acid-AMP (pHBA-AMP), which is converted directly to p-hydroxybenzoyl-S-FadD22 (pHBA-S-FAdD22) thioester intermediate in a CoA-independent manner by attack of the phosphopantetheine thiol of FadD22. Usually, this intermediate primes the biosynthesis of the phenolphthiocerol (PPOL) by presenting the pHBA starter unit for elongation by Pks15/1, but M.tuberculosis lacks Pks15/1 due to a natural frameshift and thus is unable to produce PPOL. The sequence is that of p-hydroxybenzoic acid--AMP ligase FadD22 (fadD22) from Mycobacterium tuberculosis (strain CDC 1551 / Oshkosh).